We begin with the raw amino-acid sequence, 175 residues long: ATP-dependent protease subunit HslV (175 aa).

Residue Thr-2 is part of the active site. Residues Ala-156, Cys-159, and Thr-162 each contribute to the Na(+) site.

This sequence belongs to the peptidase T1B family. HslV subfamily. In terms of assembly, a double ring-shaped homohexamer of HslV is capped on each side by a ring-shaped HslU homohexamer. The assembly of the HslU/HslV complex is dependent on binding of ATP.

Its subcellular location is the cytoplasm. It carries out the reaction ATP-dependent cleavage of peptide bonds with broad specificity.. With respect to regulation, allosterically activated by HslU binding. Protease subunit of a proteasome-like degradation complex believed to be a general protein degrading machinery. In Rhizobium etli (strain ATCC 51251 / DSM 11541 / JCM 21823 / NBRC 15573 / CFN 42), this protein is ATP-dependent protease subunit HslV.